The chain runs to 68 residues: Putative transcript Y 10 protein (68 aa).

The chain is Putative transcript Y 10 protein (TTTY10) from Homo sapiens (Human).